Here is a 122-residue protein sequence, read N- to C-terminus: Large ribosomal subunit protein uL14 (122 aa).

Belongs to the universal ribosomal protein uL14 family. Part of the 50S ribosomal subunit. Forms a cluster with proteins L3 and L19. In the 70S ribosome, L14 and L19 interact and together make contacts with the 16S rRNA in bridges B5 and B8.

In terms of biological role, binds to 23S rRNA. Forms part of two intersubunit bridges in the 70S ribosome. The polypeptide is Large ribosomal subunit protein uL14 (Janthinobacterium sp. (strain Marseille) (Minibacterium massiliensis)).